The following is an 84-amino-acid chain: Cytochrome b559 subunit alpha (84 aa).

Residues 22–36 (VIHSITIPALFVAGW) form a helical membrane-spanning segment. His-24 contributes to the heme binding site.

This sequence belongs to the PsbE/PsbF family. Heterodimer of an alpha subunit and a beta subunit. PSII is composed of 1 copy each of membrane proteins PsbA, PsbB, PsbC, PsbD, PsbE, PsbF, PsbH, PsbI, PsbJ, PsbK, PsbL, PsbM, PsbT, PsbX, PsbY, PsbZ, Psb30/Ycf12, at least 3 peripheral proteins of the oxygen-evolving complex and a large number of cofactors. It forms dimeric complexes. Requires heme b as cofactor.

It localises to the plastid. Its subcellular location is the chloroplast thylakoid membrane. Its function is as follows. This b-type cytochrome is tightly associated with the reaction center of photosystem II (PSII). PSII is a light-driven water:plastoquinone oxidoreductase that uses light energy to abstract electrons from H(2)O, generating O(2) and a proton gradient subsequently used for ATP formation. It consists of a core antenna complex that captures photons, and an electron transfer chain that converts photonic excitation into a charge separation. In Porphyra purpurea (Red seaweed), this protein is Cytochrome b559 subunit alpha.